Here is a 483-residue protein sequence, read N- to C-terminus: Protein nucleotidyltransferase YdiU (483 aa).

Residues Gly81, Gly83, Arg84, Lys103, Asp115, Gly116, Arg166, and Arg173 each contribute to the ATP site. The Proton acceptor role is filled by Asp244. Mg(2+)-binding residues include Asn245 and Asp254. Asp254 lines the ATP pocket.

The protein belongs to the SELO family. The cofactor is Mg(2+). Requires Mn(2+) as cofactor.

The catalysed reaction is L-seryl-[protein] + ATP = 3-O-(5'-adenylyl)-L-seryl-[protein] + diphosphate. It catalyses the reaction L-threonyl-[protein] + ATP = 3-O-(5'-adenylyl)-L-threonyl-[protein] + diphosphate. It carries out the reaction L-tyrosyl-[protein] + ATP = O-(5'-adenylyl)-L-tyrosyl-[protein] + diphosphate. The enzyme catalyses L-histidyl-[protein] + UTP = N(tele)-(5'-uridylyl)-L-histidyl-[protein] + diphosphate. The catalysed reaction is L-seryl-[protein] + UTP = O-(5'-uridylyl)-L-seryl-[protein] + diphosphate. It catalyses the reaction L-tyrosyl-[protein] + UTP = O-(5'-uridylyl)-L-tyrosyl-[protein] + diphosphate. Functionally, nucleotidyltransferase involved in the post-translational modification of proteins. It can catalyze the addition of adenosine monophosphate (AMP) or uridine monophosphate (UMP) to a protein, resulting in modifications known as AMPylation and UMPylation. The chain is Protein nucleotidyltransferase YdiU from Shewanella pealeana (strain ATCC 700345 / ANG-SQ1).